A 156-amino-acid chain; its full sequence is Ribosomal RNA large subunit methyltransferase H (156 aa).

Residues Leu-73, Gly-104, and 123-128 (LSPLTL) each bind S-adenosyl-L-methionine.

The protein belongs to the RNA methyltransferase RlmH family. As to quaternary structure, homodimer.

It is found in the cytoplasm. It catalyses the reaction pseudouridine(1915) in 23S rRNA + S-adenosyl-L-methionine = N(3)-methylpseudouridine(1915) in 23S rRNA + S-adenosyl-L-homocysteine + H(+). Specifically methylates the pseudouridine at position 1915 (m3Psi1915) in 23S rRNA. The sequence is that of Ribosomal RNA large subunit methyltransferase H from Pectobacterium carotovorum subsp. carotovorum (strain PC1).